The chain runs to 869 residues: NACHT, LRR and PYD domains-containing protein 6 (869 aa).

The 92-residue stretch at 37-128 (KLRDAPLDGR…REHVLRQHAK (92 aa)) folds into the Pyrin domain. The region spanning 194–511 (LTVVLQGPAG…EFLAALSYLL (318 aa)) is the NACHT domain. 200–207 (GPAGIGKT) lines the ATP pocket. Positions 350-354 (KDKKK) are disordered. One copy of the LRR 1 repeat lies at 460–485 (EEDLEKLKLRGSQVQTIFLNKKEIPG). Residues 577-608 (VQGQSHPKGPPVGAKKTAELEDIEDAEEEEEE) are disordered. A compositionally biased stretch (acidic residues) spans 596–608 (LEDIEDAEEEEEE). LRR repeat units lie at residues 635-658 (LSSLPEIVLERVRLTRMDLEVLNY) and 837-860 (TLSLTSVELSENSLRDLQAVKTSK).

Belongs to the NLRP family. As to quaternary structure, homomultimer; forms the NLRP6 inflammasome polymeric complex, a filament composed of homopolymers in response to pathogens and other damage-associated signals. The core of NLRP6 inflammasomes consists of a signal sensor component (NLRP6), an adapter (PYCARD/ASC), which recruits effector pro-inflammatory caspases (CASP1 and CASP4). Interacts (via pyrin domain) with PYCARD/ASC (via pyrin domain); interaction takes place following NLRP6 activation and formation of liquid-liquid phase separation (LLPS), initiating nucleation which greatly enhances further addition of soluble PYCARD/ASC molecules to the speck in a prion-like polymerization process. Clustered PYCARD/ASC nucleates the formation of CASP1 (or possibly CASP4) filaments through the interaction of their respective CARD domains, acting as a platform for CASP1 polymerization. CASP1 filament formation increases local enzyme concentration, resulting in trans-autocleavage and activation. Active CASP1 then processes IL1B and IL18 precursors, leading to the release of mature cytokines in the extracellular milieu and inflammatory response. Interacts with DHX15. Polyubiquitinated with 'Lys-63'-linked chains, promoting the interaction with PYCARD/ASC and formation of the NLRP6 inflammasome. Deubiquitination by CYLD decreases the interaction with PYCARD/ASC. Highly expressed in the gastrointestinal tract, predominantly in colonic myofibroblasts and in colonic epithelial and endothelial cells. Within the intestinal mucosa, highly expressed by goblet cells. Also expressed in hepatocytes and in immune cells, including CD4(+) and CD8(+) T-cells, dendritic cells, mastocytes and peritoneal macrophages, as well as in lung, kidney, bladder and gonads.

Its subcellular location is the cytoplasm. It localises to the inflammasome. The protein localises to the cell membrane. The protein resides in the nucleus membrane. In terms of biological role, acts as the sensor component of the NLRP6 inflammasome, which mediates inflammasome activation in response to various pathogen-associated signals, leading to maturation and secretion of IL1B and IL18. Inflammasomes are supramolecular complexes that assemble in the cytosol in response to pathogens and other damage-associated signals and play critical roles in innate immunity and inflammation. Acts as a recognition receptor (PRR): recognizes and binds specific pathogens and other damage-associated signals, such as lipoteichoic acid (LTA), a cell-wall component of Gram-positive bacteria, or double stranded RNA (dsRNA). May also recognize and bind lipopolysaccharide (LPS), a major component of the outer membrane of Gram-negative bacteria; however, LPS is probably not a major activator of the NLRP6 inflammasome. Following LTA- or dsRNA-binding, NLRP6 undergoes liquid-liquid phase separation (LLPS), enhancing multivalent interactions, an essential step for the formation of the NLRP6 inflammasome polymeric complex. The NLRP6 inflammasome acts by promoting recruitment of effector pro-inflammatory caspases (CASP1 and/or CASP4) that catalyze maturation and secretion of IL1B and IL18 in the extracellular milieu. The NLRP6 inflammasome plays a central role in the maintenance of epithelial integrity and host defense against microbial infections in the intestine. Required to restrict infection against Gram-positive bacteria by recognizing lipoteichoic acid (LTA), leading to recruitment of CASP4 and CASP1, and subsequent maturation and secretion of IL1B and IL18. Involved in intestinal antiviral innate immunity together with DHX15: recognizes and binds viral dsRNA to restrict infection by enteric viruses through the interferon pathway and GSDMD-dependent release of IL18. Required to prevent infection by the apicomplexan parasite C.tyzzeri in enterocytes by promoting GSDMD-dependent release of IL18. The NLRP6 inflammasome may also regulate the gut microbiota composition by acting as a sensor of microbiota-associated metabolites to form a PYCARD/ASC-dependent inflammasome for downstream IL18 release and secretion of antimicrobial peptides. Its role in the regulation of the gut microbiota composition is however subject to discussion. Essential for gut mucosal self-renewal and proliferation. Regulate mucus secretion in an inflammasome- and autophagy-dependent manner to prevent invasion by enteric bacteria. During systemic bacterial infections, the NLRP6 inflammasome negatively regulates neutrophil recruitment and neutrophil extracellular traps (NETs) formation. May promote peripheral nerve recovery following injury via an inflammasome-independent mechanism. This is NACHT, LRR and PYD domains-containing protein 6 from Mus musculus (Mouse).